A 481-amino-acid polypeptide reads, in one-letter code: Bifunctional protein HldE (481 aa).

A ribokinase region spans residues 1-318 (MKVTLPDFRR…ENAIRGRAET (318 aa)). 195-198 (NLSE) lines the ATP pocket. D264 is an active-site residue. Positions 344–481 (MTNGIFDILH…KRRAGQRTVV (138 aa)) are cytidylyltransferase.

This sequence in the N-terminal section; belongs to the carbohydrate kinase PfkB family. The protein in the C-terminal section; belongs to the cytidylyltransferase family. In terms of assembly, homodimer.

The catalysed reaction is D-glycero-beta-D-manno-heptose 7-phosphate + ATP = D-glycero-beta-D-manno-heptose 1,7-bisphosphate + ADP + H(+). It catalyses the reaction D-glycero-beta-D-manno-heptose 1-phosphate + ATP + H(+) = ADP-D-glycero-beta-D-manno-heptose + diphosphate. It participates in nucleotide-sugar biosynthesis; ADP-L-glycero-beta-D-manno-heptose biosynthesis; ADP-L-glycero-beta-D-manno-heptose from D-glycero-beta-D-manno-heptose 7-phosphate: step 1/4. The protein operates within nucleotide-sugar biosynthesis; ADP-L-glycero-beta-D-manno-heptose biosynthesis; ADP-L-glycero-beta-D-manno-heptose from D-glycero-beta-D-manno-heptose 7-phosphate: step 3/4. In terms of biological role, catalyzes the phosphorylation of D-glycero-D-manno-heptose 7-phosphate at the C-1 position to selectively form D-glycero-beta-D-manno-heptose-1,7-bisphosphate. Catalyzes the ADP transfer from ATP to D-glycero-beta-D-manno-heptose 1-phosphate, yielding ADP-D-glycero-beta-D-manno-heptose. This chain is Bifunctional protein HldE, found in Sodalis glossinidius (strain morsitans).